A 96-amino-acid chain; its full sequence is Co-chaperonin GroES (96 aa).

This sequence belongs to the GroES chaperonin family. As to quaternary structure, heptamer of 7 subunits arranged in a ring. Interacts with the chaperonin GroEL.

Its subcellular location is the cytoplasm. Functionally, together with the chaperonin GroEL, plays an essential role in assisting protein folding. The GroEL-GroES system forms a nano-cage that allows encapsulation of the non-native substrate proteins and provides a physical environment optimized to promote and accelerate protein folding. GroES binds to the apical surface of the GroEL ring, thereby capping the opening of the GroEL channel. The chain is Co-chaperonin GroES from Nitrosospira multiformis (strain ATCC 25196 / NCIMB 11849 / C 71).